Consider the following 190-residue polypeptide: 3-isopropylmalate dehydratase small subunit (190 aa).

This sequence belongs to the LeuD family. LeuD type 1 subfamily. As to quaternary structure, heterodimer of LeuC and LeuD.

It carries out the reaction (2R,3S)-3-isopropylmalate = (2S)-2-isopropylmalate. Its pathway is amino-acid biosynthesis; L-leucine biosynthesis; L-leucine from 3-methyl-2-oxobutanoate: step 2/4. Catalyzes the isomerization between 2-isopropylmalate and 3-isopropylmalate, via the formation of 2-isopropylmaleate. The sequence is that of 3-isopropylmalate dehydratase small subunit from Staphylococcus aureus (strain MRSA252).